Reading from the N-terminus, the 285-residue chain is 4-diphosphocytidyl-2-C-methyl-D-erythritol kinase (285 aa).

The active site involves Lys-12. Residue 95 to 105 participates in ATP binding; that stretch reads PMGGGVGGGSS. Residue Asp-137 is part of the active site.

The protein belongs to the GHMP kinase family. IspE subfamily.

The catalysed reaction is 4-CDP-2-C-methyl-D-erythritol + ATP = 4-CDP-2-C-methyl-D-erythritol 2-phosphate + ADP + H(+). The protein operates within isoprenoid biosynthesis; isopentenyl diphosphate biosynthesis via DXP pathway; isopentenyl diphosphate from 1-deoxy-D-xylulose 5-phosphate: step 3/6. In terms of biological role, catalyzes the phosphorylation of the position 2 hydroxy group of 4-diphosphocytidyl-2C-methyl-D-erythritol. The chain is 4-diphosphocytidyl-2-C-methyl-D-erythritol kinase from Actinobacillus pleuropneumoniae serotype 5b (strain L20).